A 586-amino-acid polypeptide reads, in one-letter code: Kelch-like protein 7 (586 aa).

One can recognise a BTB domain in the interval 44-111 (CDVILTVQER…AYTARISVNS (68 aa)). In terms of domain architecture, BACK spans 146–248 (CLGISVLAEC…SKNFLSKTVQ (103 aa)). Kelch repeat units follow at residues 294-336 (RIAL…FWDN), 337-382 (VVYI…AAEG), 383-430 (KIYT…EANG), 431-481 (LIYV…FVKD), 483-528 (IFAV…AVGS), and 530-575 (IYVL…CVVD).

As to quaternary structure, homodimer. Component of the BCR(KLHL7) E3 ubiquitin ligase complex, at least composed of CUL3 and KLHL7 and RBX1.

It localises to the nucleus. The protein resides in the cytoplasm. The protein operates within protein modification; protein ubiquitination. Functionally, substrate-specific adapter of a BCR (BTB-CUL3-RBX1) E3 ubiquitin ligase complex. The BCR(KLHL7) complex acts by mediating ubiquitination and subsequent degradation of substrate proteins. Probably mediates 'Lys-48'-linked ubiquitination. The sequence is that of Kelch-like protein 7 (Klhl7) from Mus musculus (Mouse).